Consider the following 249-residue polypeptide: Serine acetyltransferase (249 aa).

It belongs to the transferase hexapeptide repeat family.

It is found in the cytoplasm. The catalysed reaction is L-serine + acetyl-CoA = O-acetyl-L-serine + CoA. The protein operates within amino-acid biosynthesis; L-cysteine biosynthesis; L-cysteine from L-serine: step 1/2. This is Serine acetyltransferase (cysE) from Synechocystis sp. (strain ATCC 27184 / PCC 6803 / Kazusa).